We begin with the raw amino-acid sequence, 480 residues long: DNA repair protein RadA (480 aa).

The C4-type zinc-finger motif lies at 10–27 (CSECRHVSAKWVGRCLEC). 95–102 (GDPGVGKS) serves as a coordination point for ATP. The short motif at 254 to 258 (KNRFG) is the RadA KNRFG motif element. The tract at residues 353 to 480 (DIYLSTVGGM…TGHVPLGRGT (128 aa)) is lon-protease-like. The disordered stretch occupies residues 459–480 (GTTLATPPSHSGTGHVPLGRGT). Polar residues predominate over residues 461–470 (TLATPPSHSG).

This sequence belongs to the RecA family. RadA subfamily.

In terms of biological role, DNA-dependent ATPase involved in processing of recombination intermediates, plays a role in repairing DNA breaks. Stimulates the branch migration of RecA-mediated strand transfer reactions, allowing the 3' invading strand to extend heteroduplex DNA faster. Binds ssDNA in the presence of ADP but not other nucleotides, has ATPase activity that is stimulated by ssDNA and various branched DNA structures, but inhibited by SSB. Does not have RecA's homology-searching function. In Mycobacterium tuberculosis (strain CDC 1551 / Oshkosh), this protein is DNA repair protein RadA.